The following is a 360-amino-acid chain: Nicotinate-nucleotide--dimethylbenzimidazole phosphoribosyltransferase (360 aa).

The Proton acceptor role is filled by Glu327.

Belongs to the CobT family.

The catalysed reaction is 5,6-dimethylbenzimidazole + nicotinate beta-D-ribonucleotide = alpha-ribazole 5'-phosphate + nicotinate + H(+). It functions in the pathway nucleoside biosynthesis; alpha-ribazole biosynthesis; alpha-ribazole from 5,6-dimethylbenzimidazole: step 1/2. Catalyzes the synthesis of alpha-ribazole-5'-phosphate from nicotinate mononucleotide (NAMN) and 5,6-dimethylbenzimidazole (DMB). This chain is Nicotinate-nucleotide--dimethylbenzimidazole phosphoribosyltransferase, found in Shewanella baltica (strain OS185).